The following is a 355-amino-acid chain: MSFSDNLVKILDKYENLGRKLSSGIIGDEFVKASKEYAELEDIVVKIKEYNKVKSELEEANNLRLEVALDNATLEMINNEIYILENLLPKLERAVRISLLPKDEADSKSAIIEVRAGSGGEEAALFAAVLFNMYQRYAEFKGWRFEILAISNTGIGGYKEASASIKGKDVFSKLKFESGVHRVQRVPETESQGRIHTSAATVAVLPEAEGVDIKIEDKDLRIDTYRSSGAGGQHVNTTDSAVRITHIPTGITVALQDEKSQHKNKAKALKILRARLYEEKRRQKEQERSDSRRWQVGSGDRSERIRTYNFLHGRVSDHRINLTLYKIDEVVKHGQLDEFIEALIANDEAKKLSEL.

The residue at position 233 (glutamine 233) is an N5-methylglutamine.

Belongs to the prokaryotic/mitochondrial release factor family. Methylated by PrmC. Methylation increases the termination efficiency of RF1.

It localises to the cytoplasm. Functionally, peptide chain release factor 1 directs the termination of translation in response to the peptide chain termination codons UAG and UAA. This Rickettsia typhi (strain ATCC VR-144 / Wilmington) protein is Peptide chain release factor 1.